Here is a 107-residue protein sequence, read N- to C-terminus: Thioredoxin (107 aa).

Residues 2–107 (SVSQVTDASF…LASTLNKYIS (106 aa)) form the Thioredoxin domain. Catalysis depends on nucleophile residues Cys-31 and Cys-34. A disulfide bridge connects residues Cys-31 and Cys-34.

This sequence belongs to the thioredoxin family.

The protein localises to the plastid. It localises to the chloroplast. Functionally, participates in various redox reactions through the reversible oxidation of its active center dithiol to a disulfide and catalyzes dithiol-disulfide exchange reactions. This Pyropia yezoensis (Susabi-nori) protein is Thioredoxin (trxA).